The following is a 279-amino-acid chain: Shikimate dehydrogenase (NADP(+)) (279 aa).

Residues S19 to S21 and T66 contribute to the shikimate site. K70 acts as the Proton acceptor in catalysis. Shikimate contacts are provided by N91 and D106. Residues G129 to A133 and F222 each bind NADP(+). Residue Y224 participates in shikimate binding. G243 contributes to the NADP(+) binding site.

Belongs to the shikimate dehydrogenase family. Homodimer.

It carries out the reaction shikimate + NADP(+) = 3-dehydroshikimate + NADPH + H(+). It participates in metabolic intermediate biosynthesis; chorismate biosynthesis; chorismate from D-erythrose 4-phosphate and phosphoenolpyruvate: step 4/7. Involved in the biosynthesis of the chorismate, which leads to the biosynthesis of aromatic amino acids. Catalyzes the reversible NADPH linked reduction of 3-dehydroshikimate (DHSA) to yield shikimate (SA). In Anaeromyxobacter sp. (strain Fw109-5), this protein is Shikimate dehydrogenase (NADP(+)).